A 64-amino-acid chain; its full sequence is Alpha-conotoxin-like Ac1.1b (64 aa).

A signal peptide spans 1–21 (MGMRMMFTLFLLVVLTTTVVS). A propeptide spanning residues 22–47 (FPSDSASDGRDDEAKDERSDMYKSKR) is cleaved from the precursor. Residues 23–46 (PSDSASDGRDDEAKDERSDMYKSK) form a disordered region. The span at 28 to 44 (SDGRDDEAKDERSDMYK) shows a compositional bias: basic and acidic residues. Cystine bridges form between Cys-51-Cys-56 and Cys-52-Cys-62. Cysteine amide is present on Cys-62.

Belongs to the conotoxin A superfamily. In terms of tissue distribution, expressed by the venom duct.

The protein resides in the secreted. In terms of biological role, alpha-conotoxins act on postsynaptic membranes, they bind to the nicotinic acetylcholine receptors (nAChR) and thus inhibit them. This Conus achatinus (Little frog cone) protein is Alpha-conotoxin-like Ac1.1b.